The sequence spans 336 residues: Immune-associated nucleotide-binding protein 6 (336 aa).

The region spanning 33 to 241 (EPVKNVVLVG…FTDTMHRRIQ (209 aa)) is the AIG1-type G domain. Residues 42-49 (GRTGNGKS) form a G1 region. Residues 42 to 50 (GRTGNGKSA) and Ser63 contribute to the GTP site. The segment at 69–73 (GVTTR) is G2. The interval 91-94 (DTPG) is G3. Residues 161-164 (TCGD) form a G4 region. Positions 200–202 (DNR) are G5. A GTP-binding site is contributed by Asn201. The stretch at 237 to 270 (HRRIQEEAARVKREEKEIEEKNIADEEKAALKKQ) forms a coiled coil.

Belongs to the TRAFAC class TrmE-Era-EngA-EngB-Septin-like GTPase superfamily. AIG1/Toc34/Toc159-like paraseptin GTPase family. IAN subfamily. In terms of tissue distribution, mostly expressed in pollen. Also detected in lateral roots and radicles.

This is Immune-associated nucleotide-binding protein 6 from Arabidopsis thaliana (Mouse-ear cress).